The sequence spans 414 residues: Histidine--tRNA ligase (414 aa).

Belongs to the class-II aminoacyl-tRNA synthetase family. Homodimer.

The protein resides in the cytoplasm. It carries out the reaction tRNA(His) + L-histidine + ATP = L-histidyl-tRNA(His) + AMP + diphosphate + H(+). The protein is Histidine--tRNA ligase of Mycoplasma mycoides subsp. mycoides SC (strain CCUG 32753 / NCTC 10114 / PG1).